The following is a 338-amino-acid chain: Phenylalanine--tRNA ligase alpha subunit (338 aa).

Mg(2+) is bound at residue Glu253.

This sequence belongs to the class-II aminoacyl-tRNA synthetase family. Phe-tRNA synthetase alpha subunit type 1 subfamily. Tetramer of two alpha and two beta subunits. It depends on Mg(2+) as a cofactor.

Its subcellular location is the cytoplasm. It carries out the reaction tRNA(Phe) + L-phenylalanine + ATP = L-phenylalanyl-tRNA(Phe) + AMP + diphosphate + H(+). The sequence is that of Phenylalanine--tRNA ligase alpha subunit from Geotalea uraniireducens (strain Rf4) (Geobacter uraniireducens).